Here is a 502-residue protein sequence, read N- to C-terminus: Keratin-associated protein 16-1 (502 aa).

Tandem repeats lie at residues 4 to 8 (CCCSR), 58 to 62 (CCQPS), 73 to 77 (CCEAT), 93 to 97 (CCEAT), 108 to 112 (CCQPV), 113 to 117 (CCEAT), 133 to 137 (CCEAT), 152 to 156 (CCETS), 177 to 181 (CCQPV), 187 to 191 (CCSAV), 212 to 216 (CCQPV), 222 to 226 (CCPSV), 272 to 276 (CCVQG), 292 to 296 (CCVSS), and 347 to 351 (CCRPG). A 15 X 5 AA repeats of C-C-X(3) region spans residues 73 to 307 (CCEATICEPS…CQPVCPEPSP (235 aa)). The tract at residues 435 to 502 (RQPCTDSDND…QPAASKPADR (68 aa)) is disordered. Residues 489 to 502 (AAAPQPAASKPADR) show a composition bias toward low complexity.

It belongs to the KRTAP type 16 family. As to quaternary structure, interacts with hair keratins.

In the hair cortex, hair keratin intermediate filaments are embedded in an interfilamentous matrix, consisting of hair keratin-associated proteins (KRTAP), which are essential for the formation of a rigid and resistant hair shaft through their extensive disulfide bond cross-linking with abundant cysteine residues of hair keratins. The matrix proteins include the high-sulfur and high-glycine-tyrosine keratins. The chain is Keratin-associated protein 16-1 (Krtap16-1) from Mus musculus (Mouse).